The chain runs to 313 residues: Methionyl-tRNA formyltransferase (313 aa).

113–116 (SLLP) is a (6S)-5,6,7,8-tetrahydrofolate binding site.

Belongs to the Fmt family.

The enzyme catalyses L-methionyl-tRNA(fMet) + (6R)-10-formyltetrahydrofolate = N-formyl-L-methionyl-tRNA(fMet) + (6S)-5,6,7,8-tetrahydrofolate + H(+). Its function is as follows. Attaches a formyl group to the free amino group of methionyl-tRNA(fMet). The formyl group appears to play a dual role in the initiator identity of N-formylmethionyl-tRNA by promoting its recognition by IF2 and preventing the misappropriation of this tRNA by the elongation apparatus. The sequence is that of Methionyl-tRNA formyltransferase from Francisella tularensis subsp. tularensis (strain FSC 198).